Here is a 498-residue protein sequence, read N- to C-terminus: Glycerol kinase (498 aa).

Position 12 (Thr-12) interacts with ADP. Positions 12, 13, and 14 each coordinate ATP. Position 12 (Thr-12) interacts with sn-glycerol 3-phosphate. Arg-16 is a binding site for ADP. Sn-glycerol 3-phosphate is bound by residues Arg-82, Glu-83, Tyr-134, and Asp-241. 5 residues coordinate glycerol: Arg-82, Glu-83, Tyr-134, Asp-241, and Gln-242. Residues Thr-263 and Gly-310 each contribute to the ADP site. 4 residues coordinate ATP: Thr-263, Gly-310, Gln-314, and Gly-411. 2 residues coordinate ADP: Gly-411 and Asn-415.

Belongs to the FGGY kinase family.

It carries out the reaction glycerol + ATP = sn-glycerol 3-phosphate + ADP + H(+). The protein operates within polyol metabolism; glycerol degradation via glycerol kinase pathway; sn-glycerol 3-phosphate from glycerol: step 1/1. Its activity is regulated as follows. Inhibited by fructose 1,6-bisphosphate (FBP). In terms of biological role, key enzyme in the regulation of glycerol uptake and metabolism. Catalyzes the phosphorylation of glycerol to yield sn-glycerol 3-phosphate. The protein is Glycerol kinase of Herminiimonas arsenicoxydans.